The primary structure comprises 363 residues: Ribosomal RNA large subunit methyltransferase M (363 aa).

Residues S194, 227 to 230 (CPGG), D246, D266, and D284 contribute to the S-adenosyl-L-methionine site. The active-site Proton acceptor is the K313.

It belongs to the class I-like SAM-binding methyltransferase superfamily. RNA methyltransferase RlmE family. RlmM subfamily. In terms of assembly, monomer.

Its subcellular location is the cytoplasm. It catalyses the reaction cytidine(2498) in 23S rRNA + S-adenosyl-L-methionine = 2'-O-methylcytidine(2498) in 23S rRNA + S-adenosyl-L-homocysteine + H(+). In terms of biological role, catalyzes the 2'-O-methylation at nucleotide C2498 in 23S rRNA. This is Ribosomal RNA large subunit methyltransferase M from Mannheimia succiniciproducens (strain KCTC 0769BP / MBEL55E).